Here is a 213-residue protein sequence, read N- to C-terminus: BAG family molecular chaperone regulator 6, mitochondrial (213 aa).

The 30-residue stretch at 53–82 (DDAAAARIQAAFRGHLVRRHAAAVRGADDE) folds into the IQ domain. Residues 75–152 (AVRGADDEAT…GLQEVFDAVL (78 aa)) enclose the BAG domain.

Interacts with CAM1-1 under normal conditions. Dissociation of the interaction when calcium-CAM1-1 binding increases under saline-alkaline stress.

It is found in the mitochondrion. In terms of biological role, co-chaperone that regulates stress responses. Acts as a negative regulator of saline-alkaline stress tolerance. May participate in stress response through regulating the homeostasis of iron, manganese and zinc ions. This is BAG family molecular chaperone regulator 6, mitochondrial from Oryza sativa subsp. japonica (Rice).